The following is a 141-amino-acid chain: Hemoglobin subunit alpha (141 aa).

Residues 1 to 141 (VLSPEDKNHV…VSTVLTSKYR (141 aa)) form the Globin domain. The residue at position 3 (S3) is a Phosphoserine. K7 is subject to N6-succinyllysine. K16 bears the N6-acetyllysine; alternate mark. N6-succinyllysine; alternate is present on K16. Y24 is modified (phosphotyrosine). Residue S35 is modified to Phosphoserine. K40 is modified (N6-succinyllysine). S49 is modified (phosphoserine). Residue H58 coordinates O2. A heme b-binding site is contributed by H87. A Phosphoserine modification is found at S102. T108 carries the post-translational modification Phosphothreonine. S124 and S131 each carry phosphoserine. T134 and T137 each carry phosphothreonine. Position 138 is a phosphoserine (S138).

It belongs to the globin family. As to quaternary structure, heterotetramer of two alpha chains and two beta chains. Red blood cells.

Involved in oxygen transport from the lung to the various peripheral tissues. In terms of biological role, hemopressin acts as an antagonist peptide of the cannabinoid receptor CNR1. Hemopressin-binding efficiently blocks cannabinoid receptor CNR1 and subsequent signaling. In Spalax ehrenbergi (Middle East blind mole rat), this protein is Hemoglobin subunit alpha (HBA).